A 1177-amino-acid polypeptide reads, in one-letter code: Chromosome partition protein Smc (1177 aa).

34–41 (ANGSGKSN) lines the ATP pocket. A coiled-coil region spans residues 167–506 (SGIAEYDSKK…IAAEAQREVR (340 aa)). Positions 521 to 627 (GIYGTLAELI…VIVNSMEEAR (107 aa)) constitute an SMC hinge domain. The stretch at 659 to 1012 (LAVDTTKLRE…NEIEKEKKNV (354 aa)) forms a coiled coil.

The protein belongs to the SMC family. In terms of assembly, homodimer.

It is found in the cytoplasm. Its function is as follows. Required for chromosome condensation and partitioning. Binds single-stranded but not double-stranded DNA. This Pyrococcus furiosus (strain ATCC 43587 / DSM 3638 / JCM 8422 / Vc1) protein is Chromosome partition protein Smc.